We begin with the raw amino-acid sequence, 300 residues long: Nucleotide-binding protein MCCL_0516 (300 aa).

Position 15 to 22 (15 to 22) interacts with ATP; the sequence is GMSGAGKS. Residue 66–69 participates in GTP binding; it reads DLRG.

This sequence belongs to the RapZ-like family.

Its function is as follows. Displays ATPase and GTPase activities. The protein is Nucleotide-binding protein MCCL_0516 of Macrococcus caseolyticus (strain JCSC5402) (Macrococcoides caseolyticum).